A 305-amino-acid polypeptide reads, in one-letter code: UPF0282 protein Tneu_0934 (305 aa).

It belongs to the UPF0282 family.

The polypeptide is UPF0282 protein Tneu_0934 (Pyrobaculum neutrophilum (strain DSM 2338 / JCM 9278 / NBRC 100436 / V24Sta) (Thermoproteus neutrophilus)).